We begin with the raw amino-acid sequence, 37 residues long: Photosystem I reaction center subunit IX (37 aa).

The chain crosses the membrane as a helical span at residues 4–24 (FLTTAPVVAAIWFTLTAGILI).

Belongs to the PsaJ family.

Its subcellular location is the cellular thylakoid membrane. In terms of biological role, may help in the organization of the PsaE and PsaF subunits. The sequence is that of Photosystem I reaction center subunit IX from Synechococcus sp. (strain WH7803).